Consider the following 256-residue polypeptide: 5-keto-4-deoxy-D-glucarate aldolase (256 aa).

His50 serves as the catalytic Proton acceptor. Position 151 (Gln151) interacts with substrate. Glu153 contacts Mg(2+). Residues Ser178 and Asp179 each coordinate substrate. Asp179 lines the Mg(2+) pocket.

The protein belongs to the HpcH/HpaI aldolase family. KDGluc aldolase subfamily. In terms of assembly, homohexamer; trimer of dimers. Requires Mg(2+) as cofactor.

It carries out the reaction 5-dehydro-4-deoxy-D-glucarate = 2-hydroxy-3-oxopropanoate + pyruvate. The catalysed reaction is 2-dehydro-3-deoxy-D-glucarate = 2-hydroxy-3-oxopropanoate + pyruvate. The protein operates within carbohydrate acid metabolism; galactarate degradation; D-glycerate from galactarate: step 2/3. Its function is as follows. Catalyzes the reversible retro-aldol cleavage of both 5-keto-4-deoxy-D-glucarate and 2-keto-3-deoxy-D-glucarate to pyruvate and tartronic semialdehyde. This is 5-keto-4-deoxy-D-glucarate aldolase from Escherichia fergusonii (strain ATCC 35469 / DSM 13698 / CCUG 18766 / IAM 14443 / JCM 21226 / LMG 7866 / NBRC 102419 / NCTC 12128 / CDC 0568-73).